Reading from the N-terminus, the 349-residue chain is Probable trehalose-phosphate phosphatase H (349 aa).

The protein belongs to the trehalose phosphatase family. The cofactor is a divalent metal cation.

The enzyme catalyses alpha,alpha-trehalose 6-phosphate + H2O = alpha,alpha-trehalose + phosphate. It functions in the pathway glycan biosynthesis; trehalose biosynthesis. Removes the phosphate from trehalose 6-phosphate to produce free trehalose. Trehalose accumulation in plant may improve abiotic stress tolerance. The sequence is that of Probable trehalose-phosphate phosphatase H (TPPH) from Arabidopsis thaliana (Mouse-ear cress).